The chain runs to 725 residues: Phosphoribosylformylglycinamidine synthase subunit PurL (725 aa).

His34 is an active-site residue. Residue Tyr37 participates in ATP binding. Glu93 lines the Mg(2+) pocket. Substrate-binding positions include 94–97 and Arg116; that span reads SHNH. The active-site Proton acceptor is His95. Mg(2+) is bound at residue Asp117. The disordered stretch occupies residues 220 to 241; the sequence is GASFASEDLSEDAETEDRPAVQ. Gln241 serves as a coordination point for substrate. A Mg(2+)-binding site is contributed by Asp269. 313-315 provides a ligand contact to substrate; it reads ESQ. 2 residues coordinate ATP: Asp489 and Gly526. Asn527 serves as a coordination point for Mg(2+). Ser529 is a substrate binding site.

It belongs to the FGAMS family. As to quaternary structure, monomer. Part of the FGAM synthase complex composed of 1 PurL, 1 PurQ and 2 PurS subunits.

It localises to the cytoplasm. The enzyme catalyses N(2)-formyl-N(1)-(5-phospho-beta-D-ribosyl)glycinamide + L-glutamine + ATP + H2O = 2-formamido-N(1)-(5-O-phospho-beta-D-ribosyl)acetamidine + L-glutamate + ADP + phosphate + H(+). Its pathway is purine metabolism; IMP biosynthesis via de novo pathway; 5-amino-1-(5-phospho-D-ribosyl)imidazole from N(2)-formyl-N(1)-(5-phospho-D-ribosyl)glycinamide: step 1/2. In terms of biological role, part of the phosphoribosylformylglycinamidine synthase complex involved in the purines biosynthetic pathway. Catalyzes the ATP-dependent conversion of formylglycinamide ribonucleotide (FGAR) and glutamine to yield formylglycinamidine ribonucleotide (FGAM) and glutamate. The FGAM synthase complex is composed of three subunits. PurQ produces an ammonia molecule by converting glutamine to glutamate. PurL transfers the ammonia molecule to FGAR to form FGAM in an ATP-dependent manner. PurS interacts with PurQ and PurL and is thought to assist in the transfer of the ammonia molecule from PurQ to PurL. This is Phosphoribosylformylglycinamidine synthase subunit PurL from Haloquadratum walsbyi (strain DSM 16790 / HBSQ001).